A 224-amino-acid polypeptide reads, in one-letter code: UPF0758 protein VS_0182 (224 aa).

A disordered region spans residues 1–21 (MPISKMPVESMPREKLLSRGP). Residues 102-224 (ALTSPSHTKL…VISFAERGWI (123 aa)) form the MPN domain. H173, H175, and D186 together coordinate Zn(2+). The JAMM motif signature appears at 173–186 (HNHPSGVAEPSQAD).

It belongs to the UPF0758 family.

The chain is UPF0758 protein VS_0182 from Vibrio atlanticus (strain LGP32) (Vibrio splendidus (strain Mel32)).